The following is a 224-amino-acid chain: 25 kDa integral membrane protein (224 aa).

Topologically, residues 1–12 (MKLSFTKVSLTN) are cytoplasmic. The chain crosses the membrane as a helical span at residues 13–33 (ILILFNCLFIIFSMIVLTFGV). Topologically, residues 34–52 (IPQIYLLKFANILHGVRPS) are extracellular. The helical transmembrane segment at 53 to 73 (IFPIVCFTGSFVIIVACVGII) threads the bilayer. The Cytoplasmic segment spans residues 74–80 (GLMKGGK). A helical membrane pass occupies residues 81 to 101 (CLLTMHIIALIIATIIDISTA). Residues 102-189 (TLSAIKQNEF…LNKYVRYYID (88 aa)) are Extracellular-facing. N-linked (GlcNAc...) asparagine glycosylation occurs at N120. The helical transmembrane segment at 190-210 (ILIYLCFIFGFIKLIYSLFTF) threads the bilayer. Residues 211 to 224 (TQRQRIFSEKTPVA) lie on the Cytoplasmic side of the membrane.

Belongs to the tetraspanin (TM4SF) family.

The protein localises to the membrane. The polypeptide is 25 kDa integral membrane protein (Schistosoma japonicum (Blood fluke)).